Here is a 66-residue protein sequence, read N- to C-terminus: DNA-directed RNA polymerase subunit Rpo10 (66 aa).

Cys7, Cys10, Cys44, and Cys45 together coordinate Zn(2+).

This sequence belongs to the archaeal Rpo10/eukaryotic RPB10 RNA polymerase subunit family. In terms of assembly, part of the RNA polymerase complex. Zn(2+) serves as cofactor.

Its subcellular location is the cytoplasm. The catalysed reaction is RNA(n) + a ribonucleoside 5'-triphosphate = RNA(n+1) + diphosphate. Its function is as follows. DNA-dependent RNA polymerase (RNAP) catalyzes the transcription of DNA into RNA using the four ribonucleoside triphosphates as substrates. The polypeptide is DNA-directed RNA polymerase subunit Rpo10 (Hyperthermus butylicus (strain DSM 5456 / JCM 9403 / PLM1-5)).